We begin with the raw amino-acid sequence, 184 residues long: MATRIRLQRHGRKSYAFYSIVIADSRAPRDGKFIEKIGTYNPNTNPATVDLNFDAALAWVLKGAQPSDTVRNILSREGVYMKKHLLGGVAKGAFGEAEAEAKFEAWKNNKQSGLAALKAKQDEEKKAEAKARLEAEKKINEVKAKALAEKKAAEAAEKAAAEAPAEEATEAPAEEAAATEAAAE.

A compositionally biased stretch (basic and acidic residues) spans 150 to 160 (KKAAEAAEKAA). The tract at residues 150 to 184 (KKAAEAAEKAAAEAPAEEATEAPAEEAAATEAAAE) is disordered. A compositionally biased stretch (acidic residues) spans 164–173 (PAEEATEAPA). The segment covering 174-184 (EEAAATEAAAE) has biased composition (low complexity).

This sequence belongs to the bacterial ribosomal protein bS16 family.

In Bacteroides thetaiotaomicron (strain ATCC 29148 / DSM 2079 / JCM 5827 / CCUG 10774 / NCTC 10582 / VPI-5482 / E50), this protein is Small ribosomal subunit protein bS16.